Reading from the N-terminus, the 248-residue chain is Flagellar L-ring protein (248 aa).

An N-terminal signal peptide occupies residues 1 to 23; the sequence is MRHAFRHSVRTLGLLGLLPVLSA. The N-palmitoyl cysteine moiety is linked to residue Cys24. The S-diacylglycerol cysteine moiety is linked to residue Cys24.

Belongs to the FlgH family. The basal body constitutes a major portion of the flagellar organelle and consists of four rings (L,P,S, and M) mounted on a central rod.

The protein resides in the cell outer membrane. Its subcellular location is the bacterial flagellum basal body. In terms of biological role, assembles around the rod to form the L-ring and probably protects the motor/basal body from shearing forces during rotation. This chain is Flagellar L-ring protein, found in Gluconobacter oxydans (strain 621H) (Gluconobacter suboxydans).